A 337-amino-acid chain; its full sequence is Vacuolar protein sorting-associated protein 26B-B (337 aa).

The disordered stretch occupies residues 313–337 (RFEGTSHPETRPQHSGAAALEQEHE).

This sequence belongs to the VPS26 family. As to quaternary structure, component of the heterotrimeric retromer cargo-selective complex (CSC) which is believed to associate with variable sorting nexins to form functionally distinct retromer complex variants.

The protein resides in the cytoplasm. Its subcellular location is the membrane. It is found in the endosome. Acts as a component of the retromer cargo-selective complex (CSC). The CSC is believed to be the core functional component of retromer or respective retromer complex variants acting to prevent missorting of selected transmembrane cargo proteins into the lysosomal degradation pathway. Retromer mediates retrograde transport of cargo proteins from endosomes to the trans-Golgi network (TGN). The sequence is that of Vacuolar protein sorting-associated protein 26B-B (vps26b-b) from Xenopus laevis (African clawed frog).